The primary structure comprises 570 residues: Probable diguanylate cyclase DgcQ (570 aa).

2 helical membrane-spanning segments follow: residues 20–40 (FGPG…STLL) and 360–380 (IALT…WGVI). A GGDEF domain is found at 428 to 563 (QPFSVIQLDL…GRNRICASDA (136 aa)). Position 436 (Asp-436) interacts with Mg(2+). 3 residues coordinate substrate: Asn-444, His-449, and Asp-453. Glu-479 lines the Mg(2+) pocket. Glu-479 acts as the Proton acceptor in catalysis.

In terms of assembly, homodimer. The cofactor is Mg(2+).

The protein localises to the cell inner membrane. It carries out the reaction 2 GTP = 3',3'-c-di-GMP + 2 diphosphate. Its pathway is glycan metabolism; bacterial cellulose biosynthesis. The protein operates within purine metabolism; 3',5'-cyclic di-GMP biosynthesis. Catalyzes the synthesis of cyclic-di-GMP (c-di-GMP) via the condensation of 2 GTP molecules. Cyclic-di-GMP is a second messenger which controls cell surface-associated traits in bacteria. Involved in the regulation of cellulose production. This is Probable diguanylate cyclase DgcQ from Salmonella choleraesuis (strain SC-B67).